A 484-amino-acid chain; its full sequence is FAD-dependent monooxygenase aurC (484 aa).

Residues 1–21 (MGAYSFRVIIVGGSITGMTLA) form the signal peptide. E35, G49, and R108 together coordinate FAD. Y216 is an active-site residue. 2 residues coordinate FAD: D308 and G321. The chain crosses the membrane as a helical span at residues 451 to 471 (FAVASLIVLIVVLARALDSPA).

It belongs to the paxM FAD-dependent monooxygenase family. FAD serves as cofactor.

Its subcellular location is the membrane. It participates in polyketide biosynthesis. FAD-dependent monooxygenase; part of the gene cluster that mediates the biosynthesis of aurovertins, fungal polyketides that exhibit potent inhibition of adenosine triphosphate synthase. Tha biosynthesis starts with the HR-PKS aurA that selects propionate as the starter unit; synthesizes a hexa-ene chain through the repeated functions of the KR and DH domains in the first six iterations; selectively introduces three alpha-methyl substitutions at C4, C6, and C16 using the S-adensylmethionine-dependent cMET; and shuts off KR and DH in the last three iterations to afford a 1,3,5-triketo portion that can undergo intramolecular cyclization to yield the alpha-pyrone intermediate. AurE may act as a cyclase and enhances the rate of pyrone formation and product release of aurA. The methyltransferase aurB then methylates the C17 hydroxyl group. C17 methylation is required to initiate epoxidation by the downstream monooxygenase aurC. The monooxygenase aurC and the epoxide hydrolase aurD can iteratively transform the terminal triene portion of the methylated precursor into the dioxabicyclo[3.2.1]octane scaffold of aurovertin E. Epoxidation modifications of the precursor occur in two separate steps; bis-epoxidation of the two terminal olefins takes place first, followed by another epoxidation that occurs at C7-C8 after tetrahydrofuran formation. The O-acyltransferase aurG converts aurovertin E to aurovertin A. This is FAD-dependent monooxygenase aurC from Calcarisporium arbuscula (Dendryphion arbuscula).